The sequence spans 115 residues: UPF0597 protein HI_0855 (115 aa).

The protein belongs to the UPF0597 family.

The protein is UPF0597 protein HI_0855 of Haemophilus influenzae (strain ATCC 51907 / DSM 11121 / KW20 / Rd).